A 379-amino-acid polypeptide reads, in one-letter code: Cobalt-precorrin-5B C(1)-methyltransferase (379 aa).

This sequence belongs to the CbiD family.

It carries out the reaction Co-precorrin-5B + S-adenosyl-L-methionine = Co-precorrin-6A + S-adenosyl-L-homocysteine. Its pathway is cofactor biosynthesis; adenosylcobalamin biosynthesis; cob(II)yrinate a,c-diamide from sirohydrochlorin (anaerobic route): step 6/10. Functionally, catalyzes the methylation of C-1 in cobalt-precorrin-5B to form cobalt-precorrin-6A. The chain is Cobalt-precorrin-5B C(1)-methyltransferase from Salmonella schwarzengrund (strain CVM19633).